Consider the following 570-residue polypeptide: D-xylulose kinase A (570 aa).

Substrate-binding residues include His95, Arg166, Asp282, and Asn283. ATP contacts are provided by residues Trp364, 469 to 470 (GG), and Asn473.

It belongs to the FGGY kinase family.

It localises to the cytoplasm. The catalysed reaction is D-xylulose + ATP = D-xylulose 5-phosphate + ADP + H(+). Functionally, highly specific D-xylulose kinase which participates in the catabolism of xylose. Xylose is a major component of hemicelluloses such as xylan. Most fungi utilize D-xylose via three enzymatic reactions, xylose reductase (XR), xylitol dehydrogenase (XDH), and xylulokinase, to form xylulose 5-phosphate, which enters pentose phosphate pathway. The sequence is that of D-xylulose kinase A (xkiA) from Aspergillus niger.